We begin with the raw amino-acid sequence, 233 residues long: Ribose-5-phosphate isomerase A (233 aa).

Substrate is bound by residues 28 to 31 (SGST), 83 to 86 (DGAD), and 96 to 99 (KGGG). E105 functions as the Proton acceptor in the catalytic mechanism. K123 contributes to the substrate binding site.

Belongs to the ribose 5-phosphate isomerase family. In terms of assembly, homodimer.

The enzyme catalyses aldehydo-D-ribose 5-phosphate = D-ribulose 5-phosphate. Its pathway is carbohydrate degradation; pentose phosphate pathway; D-ribose 5-phosphate from D-ribulose 5-phosphate (non-oxidative stage): step 1/1. Catalyzes the reversible conversion of ribose-5-phosphate to ribulose 5-phosphate. The chain is Ribose-5-phosphate isomerase A from Bartonella bacilliformis (strain ATCC 35685 / KC583 / Herrer 020/F12,63).